We begin with the raw amino-acid sequence, 628 residues long: Chaperone protein DnaK (628 aa).

At Thr197 the chain carries Phosphothreonine; by autocatalysis. A disordered region spans residues 597 to 628 (EQMYKGEQGAQGGAADTSKKKSDDDVIDAEIE).

The protein belongs to the heat shock protein 70 family.

In terms of biological role, acts as a chaperone. This is Chaperone protein DnaK from Sulfurimonas denitrificans (strain ATCC 33889 / DSM 1251) (Thiomicrospira denitrificans (strain ATCC 33889 / DSM 1251)).